The primary structure comprises 156 residues: uncharacterized protein (156 aa).

Disordered stretches follow at residues Lys-22–Lys-64 and Ala-81–Glu-156. Over residues Pro-43 to Gln-56 the composition is skewed to acidic residues. Ser-50 is subject to Phosphoserine. Lys-108 is modified (N6-acetyllysine). Positions Thr-121 to Lys-134 are enriched in basic and acidic residues. At Ser-148 the chain carries Phosphoserine.

This is an uncharacterized protein from Bos taurus (Bovine).